Here is a 464-residue protein sequence, read N- to C-terminus: E3 ubiquitin-protein ligase MYLIP-B (464 aa).

The region spanning 1 to 279 (MLCHITRPDS…EIHAFYRCDT (279 aa)) is the FERM domain. The RING-type zinc finger occupies 381-416 (CALCCEQEISAAFCPCGHMFCCYNCASQLQCCPVCR).

Interacts with anxa5.

The protein resides in the cytoplasm. It is found in the cytosol. The catalysed reaction is S-ubiquitinyl-[E2 ubiquitin-conjugating enzyme]-L-cysteine + [acceptor protein]-L-lysine = [E2 ubiquitin-conjugating enzyme]-L-cysteine + N(6)-ubiquitinyl-[acceptor protein]-L-lysine.. The protein operates within protein modification; protein ubiquitination. Functionally, E3 ubiquitin-protein ligase that mediates ubiquitination and subsequent proteasomal degradation of myosin regulatory light chain (MRLC). Regulates cell movements during gastrulation by acting downstream of fz7 to antagonize the frizzled-signaling pathway. The chain is E3 ubiquitin-protein ligase MYLIP-B from Danio rerio (Zebrafish).